Consider the following 302-residue polypeptide: Quinolinate synthase (302 aa).

2 residues coordinate iminosuccinate: H25 and S42. A [4Fe-4S] cluster-binding site is contributed by C87. Iminosuccinate is bound by residues 113 to 115 (YVN) and S130. C172 is a [4Fe-4S] cluster binding site. Iminosuccinate is bound by residues 198 to 200 (HPE) and T215. C260 is a [4Fe-4S] cluster binding site.

It belongs to the quinolinate synthase family. Type 2 subfamily. The cofactor is [4Fe-4S] cluster.

The protein localises to the cytoplasm. The enzyme catalyses iminosuccinate + dihydroxyacetone phosphate = quinolinate + phosphate + 2 H2O + H(+). The protein operates within cofactor biosynthesis; NAD(+) biosynthesis; quinolinate from iminoaspartate: step 1/1. Functionally, catalyzes the condensation of iminoaspartate with dihydroxyacetone phosphate to form quinolinate. The protein is Quinolinate synthase of Methanoregula boonei (strain DSM 21154 / JCM 14090 / 6A8).